The primary structure comprises 428 residues: MESLTLQPVSQINGEVNLPGSKSVSNRALLLAALAQGTTRLTNLLDSDDIRHMLNALKQLGVNYQLSTDKTVCEVEGLGSAFNASQALELYLGNAGTAMRPLAAALCLSQGEFVLTGEPRMKERPIGHLVDALRTAGADVTYLENENYPPLKITGTGLYGGEVEIDGSISSQFLTAFLMAAPLATADTVIRIKGDLVSKPYIDITLHIMAQFGVTVENRDYQEFFIPAGQTYQGAGDFLVEGDASSASYFLAAAAIKGGEVKVTGIGKKSIQGDVQFAHALEMMGAEIEWGDNYVIARRGELKAVDMDFNHIPDAAMTIAVAALFAEGTTSIRNVYNWRVKETDRLAAMATELRKVGAKVEEGNDYITIVPPTQLQHATIDTYDDHRMAMCFSLVALSDTPVTINDPKCTSKTFPDYFDKLAELSQPA.

Residues Lys-22, Ser-23, and Arg-27 each contribute to the 3-phosphoshikimate site. Phosphoenolpyruvate is bound at residue Lys-22. Gly-96 and Arg-124 together coordinate phosphoenolpyruvate. The 3-phosphoshikimate site is built by Ser-170, Ser-171, Gln-172, Ser-198, Asp-314, Asn-337, and Lys-341. Residue Gln-172 participates in phosphoenolpyruvate binding. Asp-314 acts as the Proton acceptor in catalysis. Residues Arg-345, Arg-387, and Lys-412 each contribute to the phosphoenolpyruvate site.

Belongs to the EPSP synthase family. In terms of assembly, monomer.

Its subcellular location is the cytoplasm. It carries out the reaction 3-phosphoshikimate + phosphoenolpyruvate = 5-O-(1-carboxyvinyl)-3-phosphoshikimate + phosphate. Its pathway is metabolic intermediate biosynthesis; chorismate biosynthesis; chorismate from D-erythrose 4-phosphate and phosphoenolpyruvate: step 6/7. Functionally, catalyzes the transfer of the enolpyruvyl moiety of phosphoenolpyruvate (PEP) to the 5-hydroxyl of shikimate-3-phosphate (S3P) to produce enolpyruvyl shikimate-3-phosphate and inorganic phosphate. This is 3-phosphoshikimate 1-carboxyvinyltransferase from Photobacterium profundum (strain SS9).